The sequence spans 429 residues: O-methyltransferase phnC (429 aa).

Asp285 provides a ligand contact to S-adenosyl-L-methionine.

The protein belongs to the class I-like SAM-binding methyltransferase superfamily. Cation-independent O-methyltransferase family. COMT subfamily.

It carries out the reaction (2'R)-atrovenetin + S-adenosyl-L-methionine = deoxyherqueinone + S-adenosyl-L-homocysteine + H(+). It functions in the pathway secondary metabolite biosynthesis. O-methyltransferase; part of the gene cluster that mediates the biosynthesis of phenalenones such as herqueinone, compounds that have been reported to treat tumors, bacterial infections and/or mycoses, and rheumatic diseases. The non-reducing polyketide synthase phnA synthesizes the heptaketide backbone and cyclizes it into the angular, hemiketal-containing naphtho-gamma-pyrone prephenalenone. The product template (PT) domain of phnA catalyzes only the C4-C9 aldol condensation, which is unprecedented among known PT domains. The transformation of prephenalenone to phenalenones requires an FAD-dependent monooxygenase phnB, which catalyzes the C2 aromatic hydroxylation of prephenalenone and ring opening of the gamma-pyrone ring simultaneously. Subsequent intramolecular deprotonation of C3 phenolic oxygen accelerates phenalenone ring closure to yield the tricyclic phenalenone core with a C2 hydroxylation. The prenyltransferase phnF further catalyzes reverse C-prenylation of phenalenone by direct electrophilic substitution at C6, or possibly via first a forward O-prenylation of a neighboring phenol in phenalenone, followed by a Claisen rearrangement. The hydroalkoxylation enzyme phnH catalyzes the 5-exo-trig cyclization via acid catalysis after the spontaneous deprotonation of 7-OH, which leads to the formation of the dihydrobenzofuran atrovenetin. Atrovenetin is further converted to deoxyherqueinone by the O-methyltransferase phnC which can methylate C2-OH to stabilize the northern portion of the phenalenone core. Finally, the oxidoreductase phnG converts deoxyherqueinone to herqueinone via C6 hydroxylation. The polypeptide is O-methyltransferase phnC (Penicillium herquei).